Here is a 662-residue protein sequence, read N- to C-terminus: Transketolase (662 aa).

Substrate is bound at residue H28. Thiamine diphosphate contacts are provided by residues H68 and 115–117 (GPL). D156 provides a ligand contact to Mg(2+). 2 residues coordinate thiamine diphosphate: G157 and N186. The Mg(2+) site is built by N186 and I188. Residues H261, R356, and S383 each contribute to the substrate site. A thiamine diphosphate-binding site is contributed by H261. The Proton donor role is filled by E410. A thiamine diphosphate-binding site is contributed by F436. Substrate-binding residues include H460, D468, and R519.

It belongs to the transketolase family. As to quaternary structure, homodimer. Mg(2+) is required as a cofactor. Requires Ca(2+) as cofactor. The cofactor is Mn(2+). Co(2+) serves as cofactor. It depends on thiamine diphosphate as a cofactor.

The enzyme catalyses D-sedoheptulose 7-phosphate + D-glyceraldehyde 3-phosphate = aldehydo-D-ribose 5-phosphate + D-xylulose 5-phosphate. Its pathway is carbohydrate biosynthesis; Calvin cycle. It functions in the pathway carbohydrate degradation; pentose phosphate pathway. Catalyzes the transfer of a two-carbon ketol group from a ketose donor to an aldose acceptor, via a covalent intermediate with the cofactor thiamine pyrophosphate. The sequence is that of Transketolase (tkt) from Staphylococcus aureus (strain COL).